The sequence spans 366 residues: DNA double-strand break repair protein Mre11 (366 aa).

Asp8, His10, Asp49, and Asn84 together coordinate Mn(2+). His85 acts as the Proton donor in catalysis. The Mn(2+) site is built by His158, His186, and His188.

It belongs to the MRE11/RAD32 family. As to quaternary structure, homodimer. Forms a heterotetramer composed of two Mre11 subunits and two Rad50 subunits. It depends on Mn(2+) as a cofactor.

Nuclease activity is regulated by Rad50. Functionally, part of the Rad50/Mre11 complex, which is involved in the early steps of DNA double-strand break (DSB) repair. The complex may facilitate opening of the processed DNA ends to aid in the recruitment of HerA and NurA. Mre11 binds to DSB ends and has both double-stranded 3'-5' exonuclease activity and single-stranded endonuclease activity. The polypeptide is DNA double-strand break repair protein Mre11 (Methanocaldococcus jannaschii (strain ATCC 43067 / DSM 2661 / JAL-1 / JCM 10045 / NBRC 100440) (Methanococcus jannaschii)).